The sequence spans 391 residues: Histidinol-phosphate aminotransferase (391 aa).

Residue K245 is modified to N6-(pyridoxal phosphate)lysine.

It belongs to the class-II pyridoxal-phosphate-dependent aminotransferase family. Histidinol-phosphate aminotransferase subfamily. In terms of assembly, homodimer. The cofactor is pyridoxal 5'-phosphate.

It carries out the reaction L-histidinol phosphate + 2-oxoglutarate = 3-(imidazol-4-yl)-2-oxopropyl phosphate + L-glutamate. It participates in amino-acid biosynthesis; L-histidine biosynthesis; L-histidine from 5-phospho-alpha-D-ribose 1-diphosphate: step 7/9. The sequence is that of Histidinol-phosphate aminotransferase from Bifidobacterium adolescentis (strain ATCC 15703 / DSM 20083 / NCTC 11814 / E194a).